We begin with the raw amino-acid sequence, 123 residues long: Large ribosomal subunit protein uL14c (123 aa).

This sequence belongs to the universal ribosomal protein uL14 family. In terms of assembly, part of the 50S ribosomal subunit.

The protein resides in the plastid. The protein localises to the chloroplast. Functionally, binds to 23S rRNA. The polypeptide is Large ribosomal subunit protein uL14c (Brachypodium distachyon (Purple false brome)).